The following is a 408-amino-acid chain: MRQRFVDSLDFWRYLFERFLADQGPKSAAALTYTALFAVVPIMTLIFVVLSVVPDFQGIGEQIQGFIFRNFVPSSGAVLQDYLRTFIEQARHLTWLGVGVLMVTALLMLMTVEHTFNTIWRVRRPRRGLSSFLLHWAILSLGPLLLGTGFALSTYITSLSLVSDPYALAGARMLLKVMPLLFSTAAFTLLYVAVPNTAVPLRHALLGGLFAAVLFEAAKGLFGLYVALFPTYQLIYGAFAAVPLFLLWMYLSWMIVLLGAELVCNLSASRRWRRNPLPRLLVLLGVLRVFHQSQQSGQAVRQPDLQRAGWALPDSVWDEMLDFLEREQLICRVSDGGWVLCRDLNRYSLESLLSRSPWPLPHLDQLPESLDEPWFPALRSALERLQRERAALFGDSLANWLQPPLSEP.

6 helical membrane passes run 33–53 (YTAL…LSVV), 92–112 (HLTW…LMTV), 132–152 (FLLH…GFAL), 174–194 (LLKV…YVAV), 209–229 (LFAA…VALF), and 238–258 (AFAA…IVLL).

The protein belongs to the UPF0761 family.

It is found in the cell inner membrane. This chain is UPF0761 membrane protein Avin_36810, found in Azotobacter vinelandii (strain DJ / ATCC BAA-1303).